A 429-amino-acid polypeptide reads, in one-letter code: Ribosomal protein uS12 methylthiotransferase RimO (429 aa).

The region spanning 2 to 118 is the MTTase N-terminal domain; sequence HNIFLLSLGC…VLRAIGAEYR (117 aa). [4Fe-4S] cluster-binding residues include C11, C47, C81, C142, C146, and C149. Positions 128-357 constitute a Radical SAM core domain; it reads LTPPHYAFLK…MELQETISQE (230 aa). In terms of domain architecture, TRAM spans 360–427; it reads REFEGNEIVV…PYDLEGEVIG (68 aa).

The protein belongs to the methylthiotransferase family. RimO subfamily. [4Fe-4S] cluster serves as cofactor.

The protein localises to the cytoplasm. It catalyses the reaction L-aspartate(89)-[ribosomal protein uS12]-hydrogen + (sulfur carrier)-SH + AH2 + 2 S-adenosyl-L-methionine = 3-methylsulfanyl-L-aspartate(89)-[ribosomal protein uS12]-hydrogen + (sulfur carrier)-H + 5'-deoxyadenosine + L-methionine + A + S-adenosyl-L-homocysteine + 2 H(+). Catalyzes the methylthiolation of an aspartic acid residue of ribosomal protein uS12. The polypeptide is Ribosomal protein uS12 methylthiotransferase RimO (Chlorobium limicola (strain DSM 245 / NBRC 103803 / 6330)).